We begin with the raw amino-acid sequence, 401 residues long: tRNA(Met) cytidine acetate ligase (401 aa).

ATP contacts are provided by residues 7-20 (VVEY…HLYH), glycine 101, asparagine 160, and 185-186 (RI).

This sequence belongs to the TmcAL family.

It localises to the cytoplasm. The catalysed reaction is cytidine(34) in elongator tRNA(Met) + acetate + ATP = N(4)-acetylcytidine(34) in elongator tRNA(Met) + AMP + diphosphate. Catalyzes the formation of N(4)-acetylcytidine (ac(4)C) at the wobble position of elongator tRNA(Met), using acetate and ATP as substrates. First activates an acetate ion to form acetyladenylate (Ac-AMP) and then transfers the acetyl group to tRNA to form ac(4)C34. The protein is tRNA(Met) cytidine acetate ligase of Anoxybacillus flavithermus (strain DSM 21510 / WK1).